The primary structure comprises 216 residues: Probable nicotinate-nucleotide adenylyltransferase (216 aa).

Belongs to the NadD family.

It catalyses the reaction nicotinate beta-D-ribonucleotide + ATP + H(+) = deamido-NAD(+) + diphosphate. The protein operates within cofactor biosynthesis; NAD(+) biosynthesis; deamido-NAD(+) from nicotinate D-ribonucleotide: step 1/1. Its function is as follows. Catalyzes the reversible adenylation of nicotinate mononucleotide (NaMN) to nicotinic acid adenine dinucleotide (NaAD). The sequence is that of Probable nicotinate-nucleotide adenylyltransferase from Shewanella baltica (strain OS195).